A 341-amino-acid polypeptide reads, in one-letter code: L-threonine 3-dehydrogenase (341 aa).

Cys38 lines the Zn(2+) pocket. Active-site charge relay system residues include Thr40 and His43. The Zn(2+) site is built by His63, Glu64, Cys93, Cys96, Cys99, and Cys107. NAD(+) is bound by residues Ile175, Asp195, Arg200, 262-264 (LGI), and 286-287 (IY).

The protein belongs to the zinc-containing alcohol dehydrogenase family. Homotetramer. Zn(2+) serves as cofactor.

Its subcellular location is the cytoplasm. It catalyses the reaction L-threonine + NAD(+) = (2S)-2-amino-3-oxobutanoate + NADH + H(+). It participates in amino-acid degradation; L-threonine degradation via oxydo-reductase pathway; glycine from L-threonine: step 1/2. Catalyzes the NAD(+)-dependent oxidation of L-threonine to 2-amino-3-ketobutyrate. The sequence is that of L-threonine 3-dehydrogenase from Marinomonas sp. (strain MWYL1).